Here is a 357-residue protein sequence, read N- to C-terminus: MSLTRLLIRDFRNIETADLALSPGFNFLVGANGSGKTSVLEAIYTLGHGRAFRSLQIGRVIRHEQEAFILHGRLQGEERETAIGLTKDKQGDSKVRIDGTDGHKVAELAHLMPMQLITPEGFTLLNGGPKYRRAFLDWGCFHNEPGFFTAWSNLKRLLKQRNAALRQVTRYEQLRPWDKELIPLAEQISTWRAEYSAGIAADMADTCKQFLPEFTLTFSFQRGWEKETEYAEVLERNFERDRQLTYTAHGPHKADLRIRADGAPVEDTLSRGQLKLLMCALRLAQGEFLTRESGRRCLYLIDDFASELDDERRGLLASRLKATQSQVFVSAISAEHVIDMSDENSKMFTVEKGKITD.

30 to 37 (GANGSGKT) lines the ATP pocket.

The protein belongs to the RecF family.

It localises to the cytoplasm. Its function is as follows. The RecF protein is involved in DNA metabolism; it is required for DNA replication and normal SOS inducibility. RecF binds preferentially to single-stranded, linear DNA. It also seems to bind ATP. The sequence is that of DNA replication and repair protein RecF from Escherichia fergusonii (strain ATCC 35469 / DSM 13698 / CCUG 18766 / IAM 14443 / JCM 21226 / LMG 7866 / NBRC 102419 / NCTC 12128 / CDC 0568-73).